The chain runs to 275 residues: Diaminopimelate epimerase (275 aa).

Residues N12, Q45, and N65 each coordinate substrate. The active-site Proton donor is C74. Substrate is bound by residues 75–76 (GN), N158, N191, and 209–210 (ER). C218 functions as the Proton acceptor in the catalytic mechanism. Position 219–220 (219–220 (GS)) interacts with substrate.

Belongs to the diaminopimelate epimerase family. In terms of assembly, homodimer.

It localises to the cytoplasm. It catalyses the reaction (2S,6S)-2,6-diaminopimelate = meso-2,6-diaminopimelate. It functions in the pathway amino-acid biosynthesis; L-lysine biosynthesis via DAP pathway; DL-2,6-diaminopimelate from LL-2,6-diaminopimelate: step 1/1. In terms of biological role, catalyzes the stereoinversion of LL-2,6-diaminopimelate (L,L-DAP) to meso-diaminopimelate (meso-DAP), a precursor of L-lysine and an essential component of the bacterial peptidoglycan. The protein is Diaminopimelate epimerase of Shewanella amazonensis (strain ATCC BAA-1098 / SB2B).